Consider the following 692-residue polypeptide: MAEAHISITVNGEAKEVEASQTGVELFADDKNIIAVRLNGELRDLYTPLHDGDNVESVTLDSPDGTGIMRHSATHVMAQAVQEVRPDAKLGIGPVIENGFYYDFDVKDPFTPDDLKTIEKHMQRIIKSAQRFQRRVVSEEEALREEADEPYKIELIKDKEDALETEAAVDISHKELSMYDNLDREGNVVWSDLCRGPHLPNTRYIKAFKLERAAAAYWKGSEANPMLQRIYGVAFPTKDELKAYQTRMEEAAKRDHRKLGQEMDLFSFPDEIGPGLAVFHPKGAAIINAMEDYSREMHRKNHYSFVQTPHITKGGLYETSGHLQWYKDGMYPPMHLDEEKDENGNIVKQGFDYYLKPMNCPMHNLIFKSRQRSYRELPLRLFEFGTVYRYEKSGVVHGLTRVRGLTQDDSHIYCTREQMKDELKNLLNFVLKVLKDYGLNDFYLELSTKDEHKFVGSDEIWEEATNTLAEVAEESGLELVADPGGAAFYGPKISVQARDAIGRTWQVSTIQLDFNLPERFQLEYIAPDGSHQRPVMIHRALFGSIERFFAILLEHYAGAFPAWLAPVQALGVPVADEFAPHLDKFMNSLEEDLVRVETDNSDDRFGKKIRNASKSKVPYIIIAGEEDMNNNAVSFRFRDGSQLNGVPVDQAKAWILETITKRVQVNSVDDFKAATGQPVENVEFGVADTDAE.

Residues alanine 2–threonine 59 enclose the TGS domain. Residues aspartate 255–proline 561 form a catalytic region. Zn(2+) is bound by residues cysteine 360, histidine 411, and histidine 538.

This sequence belongs to the class-II aminoacyl-tRNA synthetase family. In terms of assembly, homodimer. Zn(2+) serves as cofactor.

It is found in the cytoplasm. The catalysed reaction is tRNA(Thr) + L-threonine + ATP = L-threonyl-tRNA(Thr) + AMP + diphosphate + H(+). Its function is as follows. Catalyzes the attachment of threonine to tRNA(Thr) in a two-step reaction: L-threonine is first activated by ATP to form Thr-AMP and then transferred to the acceptor end of tRNA(Thr). Also edits incorrectly charged L-seryl-tRNA(Thr). The polypeptide is Threonine--tRNA ligase (Bifidobacterium animalis subsp. lactis (strain AD011)).